Reading from the N-terminus, the 93-residue chain is Small ribosomal subunit protein uS19 (93 aa).

The protein belongs to the universal ribosomal protein uS19 family.

In terms of biological role, protein S19 forms a complex with S13 that binds strongly to the 16S ribosomal RNA. The protein is Small ribosomal subunit protein uS19 of Ehrlichia canis (strain Jake).